A 218-amino-acid chain; its full sequence is MSEVALPAPAASTSPEKPSAGKKAKKPAKAAAAAKKKPAGPSVSELIVQAVSSSKERSGVSLAALKKALAAAGYDVEKNNSRIKLGLKSLVGKGTLVQTKGTGASGSFKLNKKVASVDAKPTATKVATKTKVTSASKKPKKASGAAAAKKSVKTPKKARKSVLTKKSSKSPKKPKAVKPKKVAKSPAKAKAVKPKGAKVKVTKPKTAAKPKKAAPKKK.

A disordered region spans residues Met-1–Ser-42. An N-acetylserine modification is found at Ser-2. 2 positions are modified to phosphoserine: Ser-2 and Ser-12. An N6-acetyllysine modification is found at Lys-17. The segment covering Ala-20–Pro-38 has biased composition (basic residues). At Lys-37 the chain carries N6-(beta-hydroxybutyryl)lysine. The region spanning Ala-39 to Lys-112 is the H15 domain. Ser-44 bears the Phosphoserine mark. Lys-55 bears the N6-(beta-hydroxybutyryl)lysine mark. Arg-57 carries the post-translational modification Citrulline. Residue Lys-67 is modified to N6-(beta-hydroxybutyryl)lysine. Lys-78 carries the N6-acetyllysine modification. Lys-88 carries the post-translational modification N6-(beta-hydroxybutyryl)lysine. Lys-93 carries the post-translational modification N6-(beta-hydroxybutyryl)lysine; alternate. Lys-93 carries the N6-acetyllysine; alternate modification. Phosphoserine; by PKC is present on Ser-107. An N6-(beta-hydroxybutyryl)lysine modification is found at Lys-109. The interval Ser-116 to Lys-218 is disordered. The segment covering Ala-119 to Lys-149 has biased composition (low complexity). Lys-125 is modified (N6-acetyllysine). 2 stretches are compositionally biased toward basic residues: residues Lys-150–Ala-183 and Lys-190–Lys-218. At Thr-206 the chain carries Phosphothreonine.

It belongs to the histone H1/H5 family. Interacts with DFFB. H1 histones are progressively phosphorylated during the cell cycle, becoming maximally phosphorylated during late G2 phase and M phase, and being dephosphorylated sharply thereafter. In terms of processing, citrullination at Arg-57 (H1R54ci) by PADI4 takes place within the DNA-binding site of H1 and results in its displacement from chromatin and global chromatin decondensation, thereby promoting pluripotency and stem cell maintenance.

It localises to the nucleus. Its subcellular location is the chromosome. In terms of biological role, H1 histones bind to linker DNA between nucleosomes forming the macromolecular structure known as the chromatin fiber. H1 histones are necessary for the condensation of nucleosome chains into higher-order structured fibers. Also acts as a regulator of individual gene transcription through chromatin remodeling. This chain is Histone H1.1, found in Bos taurus (Bovine).